Consider the following 251-residue polypeptide: 3-deoxy-manno-octulosonate cytidylyltransferase (251 aa).

This sequence belongs to the KdsB family.

Its subcellular location is the cytoplasm. It catalyses the reaction 3-deoxy-alpha-D-manno-oct-2-ulosonate + CTP = CMP-3-deoxy-beta-D-manno-octulosonate + diphosphate. Its pathway is nucleotide-sugar biosynthesis; CMP-3-deoxy-D-manno-octulosonate biosynthesis; CMP-3-deoxy-D-manno-octulosonate from 3-deoxy-D-manno-octulosonate and CTP: step 1/1. It functions in the pathway bacterial outer membrane biogenesis; lipopolysaccharide biosynthesis. Its function is as follows. Activates KDO (a required 8-carbon sugar) for incorporation into bacterial lipopolysaccharide in Gram-negative bacteria. The sequence is that of 3-deoxy-manno-octulosonate cytidylyltransferase from Sodalis glossinidius (strain morsitans).